Consider the following 353-residue polypeptide: Trans-enoyl reductase fsa3 (353 aa).

45–48 (VDTK) lines the NADP(+) pocket. 131–138 (ISFMTTGL) contributes to the substrate binding site. NADP(+) contacts are provided by residues 166–169 (SSAT), 189–192 (SPRN), tyrosine 207, and 254–255 (LE). 275–279 (GPQML) lines the substrate pocket. 344-345 (IS) is a binding site for NADP(+).

This sequence belongs to the zinc-containing alcohol dehydrogenase family. In terms of assembly, monomer.

It carries out the reaction L-serine + 7 malonyl-CoA + acetyl-CoA + 2 S-adenosyl-L-methionine + ATP + 8 NADPH + 11 H(+) = (5S)-3-[(2E,6R,8E,10E,12E)-2,6-dimethyltetradeca-2,8,10,12-tetraenoyl]-5-(hydroxymethyl)pyrrolidine-2,4-dione + AMP + 2 S-adenosyl-L-homocysteine + 7 CO2 + diphosphate + 8 NADP(+) + 8 CoA + 6 H2O. It participates in mycotoxin biosynthesis. Trans-enoyl reductase; part of the gene cluster that mediates the biosynthesis of HIV-1 integrase inhibitor equisetin and of fusarisetin A, both trans-fused decalin-containing tetramic acids showing also antimicrobial activity. The PKS module of fsa1 together with the enoylreductase fsa3 catalyze the formation of the polyketide unit which is then conjugated to L-serine by the condensation domain of the fsa1 NRPS module. Activity of the Dieckmann cyclase domain (RED) results in release of the Dieckmann product intermediate. Diels-Alderase fsa2 is involved in endo-selective Diels-Alder cycloaddition to form the decalin ring, leading to the production of N-desmethylequisetin also called trichosetin. Subsequent N-methylation is carried out by fsa4 to give equisetin. The enzymatic gene responsible for the conversion of equisetin to fusarisetin A has not been identified yet and is probably located outside of the fsa cluster. This Fusarium sp. (strain FN080326) protein is Trans-enoyl reductase fsa3.